Reading from the N-terminus, the 152-residue chain is Transcriptional regulator MraZ (152 aa).

SpoVT-AbrB domains are found at residues 5–52 (ATLV…PLPE) and 81–124 (ASEC…DEQT).

The protein belongs to the MraZ family. As to quaternary structure, forms oligomers.

Its subcellular location is the cytoplasm. The protein localises to the nucleoid. Its function is as follows. Negatively regulates its own expression and that of the subsequent genes in the proximal part of the division and cell wall (dcw) gene cluster. Acts by binding directly to DNA. May also regulate the expression of genes outside the dcw cluster. The sequence is that of Transcriptional regulator MraZ from Pectobacterium atrosepticum (strain SCRI 1043 / ATCC BAA-672) (Erwinia carotovora subsp. atroseptica).